The sequence spans 322 residues: Phosphate acetyltransferase (322 aa).

The protein belongs to the phosphate acetyltransferase and butyryltransferase family.

The protein localises to the cytoplasm. The catalysed reaction is acetyl-CoA + phosphate = acetyl phosphate + CoA. It functions in the pathway metabolic intermediate biosynthesis; acetyl-CoA biosynthesis; acetyl-CoA from acetate: step 2/2. This Mycoplasma capricolum subsp. capricolum (strain California kid / ATCC 27343 / NCTC 10154) protein is Phosphate acetyltransferase (pta).